The sequence spans 523 residues: F-box only protein 31-B (523 aa).

The region spanning 59 to 105 (PRSLLQLPPEILVEIFSSLPGTELPSLAQVCRKFRQILTTDTIWKRR) is the F-box domain. The Zn(2+) site is built by C201, H209, C225, and H231. Positions 372–427 (IQREQRQTGNEEDDGKGAGPDRAEHSQQPAPVHRPAKEDVNGVDNADDREQKPPNV) are disordered. Composition is skewed to basic and acidic residues over residues 386–396 (GKGAGPDRAEH) and 406–423 (PAKEDVNGVDNADDREQK).

The protein belongs to the FBXO31 family. Part of a SCF (SKP1-cullin-F-box) protein ligase complex SCF(FBXO31).

It localises to the cytoplasm. Its pathway is protein modification; protein ubiquitination. Functionally, substrate-recognition component of the SCF(FBXO31) protein ligase complex, which specifically mediates the ubiquitination of proteins amidated at their C-terminus in response to oxidative stress, leading to their degradation by the proteasome. Fbxo31 specifically recognizes and binds C-terminal peptides bearing an amide: C-terminal amidation in response to oxidative stress takes place following protein fragmentation. The SCF(FBXO31) also plays a role in G1 arrest following DNA damage by mediating ubiquitination of phosphorylated cyclin-D1 (ccnd1), promoting its degradation by the proteasome, resulting in G1 arrest. The SCF(FBXO31) complex is however not a major regulator of ccnd1 stability during the G1/S transition. This chain is F-box only protein 31-B (fbxo31-b), found in Xenopus laevis (African clawed frog).